Consider the following 165-residue polypeptide: Ribosome maturation factor RimM (165 aa).

The PRC barrel domain maps to 94 to 163 (EDEFYIADLN…KDYVTLNYQR (70 aa)).

This sequence belongs to the RimM family. As to quaternary structure, binds ribosomal protein uS19.

The protein resides in the cytoplasm. An accessory protein needed during the final step in the assembly of 30S ribosomal subunit, possibly for assembly of the head region. Essential for efficient processing of 16S rRNA. May be needed both before and after RbfA during the maturation of 16S rRNA. It has affinity for free ribosomal 30S subunits but not for 70S ribosomes. The chain is Ribosome maturation factor RimM from Rickettsia akari (strain Hartford).